The sequence spans 417 residues: NADH-quinone oxidoreductase subunit D (417 aa).

The protein belongs to the complex I 49 kDa subunit family. In terms of assembly, NDH-1 is composed of 14 different subunits. Subunits NuoB, C, D, E, F, and G constitute the peripheral sector of the complex.

The protein resides in the cell inner membrane. The catalysed reaction is a quinone + NADH + 5 H(+)(in) = a quinol + NAD(+) + 4 H(+)(out). Functionally, NDH-1 shuttles electrons from NADH, via FMN and iron-sulfur (Fe-S) centers, to quinones in the respiratory chain. The immediate electron acceptor for the enzyme in this species is believed to be ubiquinone. Couples the redox reaction to proton translocation (for every two electrons transferred, four hydrogen ions are translocated across the cytoplasmic membrane), and thus conserves the redox energy in a proton gradient. The protein is NADH-quinone oxidoreductase subunit D of Alkalilimnicola ehrlichii (strain ATCC BAA-1101 / DSM 17681 / MLHE-1).